Here is a 364-residue protein sequence, read N- to C-terminus: CLIP domain-containing serine protease B15 (364 aa).

The first 19 residues, 1 to 19 (MRWLVCLIVSWCSLVPLGA), serve as a signal peptide directing secretion. The 60-residue stretch at 30 to 89 (PCQTPSGTAGTCEPVKNCSYVRKILKSPDFSHYDTTYLDTLKCGDLMVPMRKKPIPLLCC) folds into the Clip domain. Cystine bridges form between C31–C88, C41–C72, and C47–C89. N46 carries N-linked (GlcNAc...) asparagine glycosylation. Positions 107–359 (IYFGEETERG…YLDWMETVMF (253 aa)) constitute a Peptidase S1 domain. N131 is a glycosylation site (N-linked (GlcNAc...) asparagine). A disulfide bond links C137 and C153. Residue H152 is the Charge relay system of the active site. N171, N177, and N206 each carry an N-linked (GlcNAc...) asparagine glycan. The Charge relay system role is filled by D212. Cysteines 279 and 296 form a disulfide. N-linked (GlcNAc...) asparagine glycans are attached at residues N287 and N301. The cysteines at positions 306 and 335 are disulfide-linked. S310 serves as the catalytic Charge relay system.

Belongs to the peptidase S1 family. CLIP subfamily. In terms of processing, N-glycosylated. Post-translationally, proteolytically cleaved. Expressed by a subpopulation of hemocytes.

The protein localises to the secreted. In terms of biological role, serine protease. Plays a role in innate immunity against infections by parasite P.berghei and by Gram-negative bacteria such as E.coli. In response to P.berghei infection, contributes to the clearing of parasite ookinetes independent of melanization, an innate immune response which consists in the deposition of melanin pigments on invading pathogens and parasites. In Anopheles gambiae (African malaria mosquito), this protein is CLIP domain-containing serine protease B15.